A 387-amino-acid polypeptide reads, in one-letter code: Intraflagellar transport protein 57 (387 aa).

The protein belongs to the IFT57 family.

It is found in the cell projection. The protein resides in the cilium. The protein localises to the flagellum. It localises to the cytoplasm. Its subcellular location is the cytoskeleton. It is found in the flagellum axoneme. The protein resides in the flagellum basal body. Its function is as follows. Component of the intraflagellar transport complex B (IFT-B) involved in flagellar assembly. This is Intraflagellar transport protein 57 from Giardia intestinalis (strain ATCC 50803 / WB clone C6) (Giardia lamblia).